The chain runs to 515 residues: Maturase K (515 aa).

Belongs to the intron maturase 2 family. MatK subfamily.

Its subcellular location is the plastid. It is found in the chloroplast. Functionally, usually encoded in the trnK tRNA gene intron. Probably assists in splicing its own and other chloroplast group II introns. This chain is Maturase K, found in Larix laricina (Tamarack).